Consider the following 445-residue polypeptide: 3-phosphoshikimate 1-carboxyvinyltransferase (445 aa).

The tract at residues 1–25 (MSHSDQTSPLEARKSAALSGTARVP) is disordered. K28, S29, and R33 together coordinate 3-phosphoshikimate. K28 is a phosphoenolpyruvate binding site. 2 residues coordinate phosphoenolpyruvate: G101 and R129. 3-phosphoshikimate is bound by residues S175, Q177, D328, and K355. Position 177 (Q177) interacts with phosphoenolpyruvate. The active-site Proton acceptor is the D328. The phosphoenolpyruvate site is built by R359 and R402.

The protein belongs to the EPSP synthase family. In terms of assembly, monomer.

The protein localises to the cytoplasm. It catalyses the reaction 3-phosphoshikimate + phosphoenolpyruvate = 5-O-(1-carboxyvinyl)-3-phosphoshikimate + phosphate. Its pathway is metabolic intermediate biosynthesis; chorismate biosynthesis; chorismate from D-erythrose 4-phosphate and phosphoenolpyruvate: step 6/7. Catalyzes the transfer of the enolpyruvyl moiety of phosphoenolpyruvate (PEP) to the 5-hydroxyl of shikimate-3-phosphate (S3P) to produce enolpyruvyl shikimate-3-phosphate and inorganic phosphate. The chain is 3-phosphoshikimate 1-carboxyvinyltransferase from Rhodopseudomonas palustris (strain BisB5).